Consider the following 599-residue polypeptide: Group II intron-encoded protein LtrA (599 aa).

Positions I70–I361 constitute a Reverse transcriptase domain. The interval N381 to S549 is intron maturase type-2.

The protein in the N-terminal section; belongs to the bacterial reverse transcriptase family. Homodimer. Mg(2+) is required as a cofactor.

It carries out the reaction DNA(n) + a 2'-deoxyribonucleoside 5'-triphosphate = DNA(n+1) + diphosphate. Multifunctional protein that promotes group II intron splicing and mobility by acting both on RNA and DNA. It has three activities: reverse transcriptase (RT) for intron duplication, maturase to promote splicing, and DNA endonuclease for site-specific cleavage of recipient alleles. The intron-encoded protein promotes splicing by facilitating the formation of the catalytically active structure of the intron RNA. After splicing, the protein remains bound to the excised intron lariat RNA, forming ribonucleoprotein particles, and cleaving the antisense strand of the recipient DNA in the 3' exon. After DNA cleavage, retrohoming occurs by a target DNA-primed reverse transcription of the intron RNA that had reverse spliced into the sense strand of the recipient DNA. It also contributes to the recognition of the DNA target site and acts as a repressor of its own translation. In Lactococcus lactis subsp. cremoris (Streptococcus cremoris), this protein is Group II intron-encoded protein LtrA (ltrA).